The sequence spans 431 residues: Sorting nexin-31 (431 aa).

The 107-residue stretch at 1 to 107 folds into the PX domain; sequence MHICIPVTEE…DYFRKLQMDT (107 aa).

The protein belongs to the sorting nexin family.

In terms of biological role, may be involved in protein trafficking. In Xenopus laevis (African clawed frog), this protein is Sorting nexin-31 (snx31).